Reading from the N-terminus, the 206-residue chain is Outer-membrane lipoprotein carrier protein (206 aa).

An N-terminal signal peptide occupies residues 1-21; that stretch reads MKKLLCAVLLSPLLYSNAVLA.

Belongs to the LolA family. As to quaternary structure, monomer.

It localises to the periplasm. Participates in the translocation of lipoproteins from the inner membrane to the outer membrane. Only forms a complex with a lipoprotein if the residue after the N-terminal Cys is not an aspartate (The Asp acts as a targeting signal to indicate that the lipoprotein should stay in the inner membrane). The protein is Outer-membrane lipoprotein carrier protein of Shewanella sp. (strain MR-4).